Reading from the N-terminus, the 819-residue chain is Leucine--tRNA ligase (819 aa).

The 'HIGH' region motif lies at 40–51 (PYPSGAGLHVGH). The 'KMSKS' region motif lies at 600 to 604 (KMSKS). Lys-603 serves as a coordination point for ATP.

This sequence belongs to the class-I aminoacyl-tRNA synthetase family.

The protein resides in the cytoplasm. It carries out the reaction tRNA(Leu) + L-leucine + ATP = L-leucyl-tRNA(Leu) + AMP + diphosphate. This chain is Leucine--tRNA ligase, found in Chlamydia muridarum (strain MoPn / Nigg).